The chain runs to 418 residues: Putative ion-transport protein YfeO (418 aa).

Helical transmembrane passes span 10 to 30, 54 to 74, 99 to 119, 120 to 140, 149 to 169, 186 to 206, 223 to 243, 258 to 278, 300 to 320, 322 to 342, 343 to 363, and 371 to 391; these read LLLS…LIVV, DSPL…GLVI, ALPG…SLGP, EHPI…RLLP, ILAS…AALI, LFAP…FFHP, ILSG…AVWC, VLVL…GGPV, DYFL…ASGF, GGRI…LHEH, VPAV…VLVV, and LFMA…CIVM.

The protein belongs to the chloride channel (TC 2.A.49) family.

It is found in the cell membrane. This is Putative ion-transport protein YfeO from Shigella boydii serotype 18 (strain CDC 3083-94 / BS512).